A 171-amino-acid chain; its full sequence is NADH-quinone oxidoreductase subunit I 1 (171 aa).

4Fe-4S ferredoxin-type domains are found at residues 39–71 (IVLT…LSKA) and 81–110 (EHFR…LTPD). Positions 51, 54, 57, 61, 90, 93, 96, and 100 each coordinate [4Fe-4S] cluster.

This sequence belongs to the complex I 23 kDa subunit family. In terms of assembly, NDH-1 is composed of 14 different subunits. Subunits NuoA, H, J, K, L, M, N constitute the membrane sector of the complex. [4Fe-4S] cluster serves as cofactor.

It localises to the cell inner membrane. The enzyme catalyses a quinone + NADH + 5 H(+)(in) = a quinol + NAD(+) + 4 H(+)(out). Functionally, NDH-1 shuttles electrons from NADH, via FMN and iron-sulfur (Fe-S) centers, to quinones in the respiratory chain. The immediate electron acceptor for the enzyme in this species is believed to be ubiquinone. Couples the redox reaction to proton translocation (for every two electrons transferred, four hydrogen ions are translocated across the cytoplasmic membrane), and thus conserves the redox energy in a proton gradient. This Rhodopseudomonas palustris (strain HaA2) protein is NADH-quinone oxidoreductase subunit I 1.